The primary structure comprises 456 residues: MIFNNLKNQNKIINFLIIFYFLSFLKQIESQSINITSSSSSWQCRGDLVYRNVSNRIEDEKIGFNFVQYNGTYQSCVIPCPSPFFTINEWNKFLNMSLVMGTISFFSGLFLLVTYSPIVNKTHNRHTIGVMCMSFGVCLAMCSDMWNFGSNFTEKSICPSPGQYLSTSNARCLSSGIFLQFGGVFGFLNWTLLSFDLFMNIKGIITKNYDKYYVSGTFIIAIIFTFVPIVNDQYSMSYIGLGCWLGSAMYQLIFFWILLSICLIVSSVFIILILKEVYIIIKLSKQKTSLKGNIRPLICISITGFAFFYMFFYYISIVVEGDYYERVLNEYTDCLMDPTKDISECKSPRMSVASEFVFLLCLRLLGIGAFIFYGINNKVKKIWLNSYWFNNSFVEKYISRKSADNDKSNSNGSKVLYRTNNTNNNGSFNTGLESSIIEMSTNSNKEESSLNSVDEI.

The first 30 residues, 1–30 (MIFNNLKNQNKIINFLIIFYFLSFLKQIES), serve as a signal peptide directing secretion. The Extracellular segment spans residues 31–92 (QSINITSSSS…PFFTINEWNK (62 aa)). 3 N-linked (GlcNAc...) asparagine glycosylation sites follow: asparagine 34, asparagine 52, and asparagine 70. The chain crosses the membrane as a helical span at residues 93 to 113 (FLNMSLVMGTISFFSGLFLLV). The Cytoplasmic segment spans residues 114–127 (TYSPIVNKTHNRHT). A helical transmembrane segment spans residues 128–148 (IGVMCMSFGVCLAMCSDMWNF). At 149–174 (GSNFTEKSICPSPGQYLSTSNARCLS) the chain is on the extracellular side. Residue asparagine 151 is glycosylated (N-linked (GlcNAc...) asparagine). A helical membrane pass occupies residues 175-195 (SGIFLQFGGVFGFLNWTLLSF). Residues 196-211 (DLFMNIKGIITKNYDK) lie on the Cytoplasmic side of the membrane. A helical membrane pass occupies residues 212–232 (YYVSGTFIIAIIFTFVPIVND). Over 233–252 (QYSMSYIGLGCWLGSAMYQL) the chain is Extracellular. A helical membrane pass occupies residues 253 to 273 (IFFWILLSICLIVSSVFIILI). The Cytoplasmic segment spans residues 274–297 (LKEVYIIIKLSKQKTSLKGNIRPL). The chain crosses the membrane as a helical span at residues 298-318 (ICISITGFAFFYMFFYYISIV). Residues 319 to 354 (VEGDYYERVLNEYTDCLMDPTKDISECKSPRMSVAS) lie on the Extracellular side of the membrane. Residues 355 to 375 (EFVFLLCLRLLGIGAFIFYGI) traverse the membrane as a helical segment. Topologically, residues 376 to 456 (NNKVKKIWLN…ESSLNSVDEI (81 aa)) are cytoplasmic. The segment at 403–422 (ADNDKSNSNGSKVLYRTNNT) is disordered.

The protein belongs to the G-protein coupled receptor Fz/Smo family.

It is found in the membrane. The chain is Frizzled/smoothened-like sans CRD protein F (fscF) from Dictyostelium discoideum (Social amoeba).